Consider the following 790-residue polypeptide: DNA ligase 1 (790 aa).

The transit peptide at 1-64 (MLAIRSSNYL…AFDALMSNAR (64 aa)) directs the protein to the mitochondrion. The tract at residues 64–142 (RAAAKKKTPQ…TGAKKAKTLS (79 aa)) is disordered. The Nuclear localization signal 1 motif lies at 68-75 (KKKTPQTT). Polar residues predominate over residues 116 to 128 (DSANPRSDTSSIA). Residues 337–346 (KLRLGFSGQT) form an interaction with target DNA region. Glutamate 442 provides a ligand contact to ATP. Lysine 444 acts as the N6-AMP-lysine intermediate in catalysis. ATP-binding residues include arginine 449 and arginine 465. Residue glutamate 497 participates in Mg(2+) binding. The short motif at 505 to 512 (KKKILPFQ) is the Nuclear localization signal 2 element. The tract at residues 518–520 (ARK) is interaction with target DNA. A Mg(2+)-binding site is contributed by glutamate 596. 3 residues coordinate ATP: lysine 601, arginine 614, and lysine 620. The tract at residues 757–790 (DKKPEEATSSEQIADLYQAQKHNHPSNEVKGDDD) is disordered. A compositionally biased stretch (basic and acidic residues) spans 781 to 790 (PSNEVKGDDD).

It belongs to the ATP-dependent DNA ligase family. It depends on Mg(2+) as a cofactor. In terms of tissue distribution, expressed in all vegetative and reproductive tissues.

It localises to the mitochondrion. It is found in the nucleus. It carries out the reaction ATP + (deoxyribonucleotide)n-3'-hydroxyl + 5'-phospho-(deoxyribonucleotide)m = (deoxyribonucleotide)n+m + AMP + diphosphate.. Functionally, essential protein. DNA ligase that seals nicks in double-stranded DNA during DNA replication, DNA recombination and DNA repair. Involved in repair of both single strand breaks (SSBs) and double strand breaks (DSBs). Required in the endosperm for embryogenesis, probably to repair DNA-breaks generated by DME. This is DNA ligase 1 (LIG1) from Arabidopsis thaliana (Mouse-ear cress).